A 179-amino-acid chain; its full sequence is Inner membrane-spanning protein YciB (179 aa).

The next 5 helical transmembrane spans lie at 24–44, 49–69, 76–96, 121–141, and 151–171; these read TATG…YAME, AMQK…LVLH, WKPT…LWAL, VAWI…AAYF, and LWGY…ISPH.

Belongs to the YciB family.

It localises to the cell inner membrane. Functionally, plays a role in cell envelope biogenesis, maintenance of cell envelope integrity and membrane homeostasis. The protein is Inner membrane-spanning protein YciB of Variovorax paradoxus (strain S110).